A 118-amino-acid polypeptide reads, in one-letter code: MIGVDIVSIARIEKCVKRFEMRFLERFLSPSEIVLCKDKFSSIAGFFALKEACSKALQVGIGKELSFLDMHISKSPKNAPLITLSKEKMDYFNIQSLSASISHDAGFAIAVVMVSSSN.

Mg(2+)-binding residues include D5 and E51.

This sequence belongs to the P-Pant transferase superfamily. AcpS family. The cofactor is Mg(2+).

It is found in the cytoplasm. It carries out the reaction apo-[ACP] + CoA = holo-[ACP] + adenosine 3',5'-bisphosphate + H(+). Its function is as follows. Transfers the 4'-phosphopantetheine moiety from coenzyme A to a Ser of acyl-carrier-protein. This is Holo-[acyl-carrier-protein] synthase from Helicobacter pylori (strain P12).